The sequence spans 207 residues: TM2 domain-containing protein 1 (207 aa).

The first 37 residues, 1 to 37, serve as a signal peptide directing secretion; that stretch reads MAAAWPSGPSAPEAVTARLVGVLWFVSVTTGPWGAVA. The Extracellular portion of the chain corresponds to 40–128; the sequence is AGGEESLKCE…YSYKVAVALS (89 aa). N-linked (GlcNAc...) asparagine glycans are attached at residues Asn-72, Asn-75, Asn-87, and Asn-96. The TM2 domain maps to 118 to 166; the sequence is GYSYKVAVALSLFLGWLGADRFYLGYPALGLLKFCTVGFCGIGSLIDFI. A helical membrane pass occupies residues 129-149; that stretch reads LFLGWLGADRFYLGYPALGLL. Residues 150 to 153 are Cytoplasmic-facing; it reads KFCT. The chain crosses the membrane as a helical span at residues 154–174; the sequence is VGFCGIGSLIDFILISMQIVG. At 175–207 the chain is on the extracellular side; that stretch reads PSDGSSYIIDYYGTRLTRLSITNETFRKTQLYP. Asn-197 carries N-linked (GlcNAc...) asparagine glycosylation.

Belongs to the TM2 family. Interacts with APP beta-APP42 (amyloid-beta protein 42). N-glycosylated. As to expression, widely expressed.

It is found in the membrane. In terms of biological role, may participate in amyloid-beta-induced apoptosis via its interaction with beta-APP42. In Homo sapiens (Human), this protein is TM2 domain-containing protein 1 (TM2D1).